The following is a 455-amino-acid chain: Peroxisomal membrane protein PEX3 (455 aa).

A compositionally biased stretch (polar residues) spans 113–125 (TVLSDDFSTSQEG). A disordered region spans residues 113-135 (TVLSDDFSTSQEGAISEDTNKPP). The helical transmembrane segment at 155-171 (FLTLIYCESLLIVFLHL) threads the bilayer.

Belongs to the peroxin-3 family. In terms of assembly, component of the peroxisomal docking complex, composed of at least PEX3, PEX13, PEX14 and PEX17. Component of the peroxisomal translocation complex, composed of at least PEX3, PEX2, PEX10 and PEX12. Interacts with PEX19. Interacts with the pexophagy receptor ATG30.

It localises to the peroxisome membrane. Its function is as follows. Peroxisomal membrane protein required for peroxisome biosynthesis. Shared component of both the peroxisomal docking complex and the peroxisomal translocation complex. The two types of peroxisomal matrix targeting signals, PTS1 and PTS2, are first recognized in the cytosol by their receptors PEX5 and PEX7, respectively, which then carry the cargo to the peroxisomal membrane. The peroxisomal targeting signal (PTS) receptor-cargo complexes interact with peroxisomal membrane protein (PMP) components of the docking complex. They have then additional downstream interactions with the translocation complex, leading to the transport of fully folded and oligomerized cargo into the peroxisome matrix. PEX3 acts as an anchoring site for PEX19 on the peroxisomal membrane and thus plays a crucial role in the assembly of the peroxisomal translocation complex. Is also essential for the interaction between the two complexes. Finally. PEX3 activates selective autophagy of peroxisomes (pexophagy) via interaction with the pexophagy receptor ATG30. This chain is Peroxisomal membrane protein PEX3, found in Komagataella pastoris (Yeast).